Here is a 434-residue protein sequence, read N- to C-terminus: Glycoprotein U20 (434 aa).

An N-terminal signal peptide occupies residues 1–15; the sequence is MITVFVACLFQCVSS. A helical membrane pass occupies residues 322–342; it reads LLWIFIVIPIAAGCMFLYILT.

It is found in the host endoplasmic reticulum membrane. The protein resides in the host lysosome membrane. Plays a role in the down-regulation of the host stress-induced NKG2D ligand UBPL1, which enables immune cells expressing the NKG2D receptor to recognize and annihilate infected cells prior to viral spread. This chain is Glycoprotein U20 (U20), found in Human herpesvirus 6B (strain Z29) (HHV-6 variant B).